Here is a 331-residue protein sequence, read N- to C-terminus: HTH-type transcriptional regulator RipA (331 aa).

The 98-residue stretch at 112-209 folds into the HTH araC/xylS-type domain; that stretch reads RAVAQVLVSN…GATPSTFTTG (98 aa). DNA-binding regions (H-T-H motif) lie at residues 129–150 and 176–199; these read EEFA…LKST and ISVV…RRHT.

Its function is as follows. Under iron limitation, RipA negatively controls the expression of the acn (aconitase), catA (catechol 1,2 dioxygenase), leuCD (isopropylmalate dehydratase), narKGHJI (nitrite/nitrate transporter and nitrate reductase), sdhCAB (succinate dehydrogenase), pta (phosphotransacetylase) and katA (catalase) genes. Binds to the consensus sequence in the promoter region. The sequence is that of HTH-type transcriptional regulator RipA from Corynebacterium glutamicum (strain ATCC 13032 / DSM 20300 / JCM 1318 / BCRC 11384 / CCUG 27702 / LMG 3730 / NBRC 12168 / NCIMB 10025 / NRRL B-2784 / 534).